The sequence spans 168 residues: 3-isopropylmalate dehydratase small subunit (168 aa).

The protein belongs to the LeuD family. LeuD type 2 subfamily. Heterodimer of LeuC and LeuD.

It carries out the reaction (2R,3S)-3-isopropylmalate = (2S)-2-isopropylmalate. It participates in amino-acid biosynthesis; L-leucine biosynthesis; L-leucine from 3-methyl-2-oxobutanoate: step 2/4. Catalyzes the isomerization between 2-isopropylmalate and 3-isopropylmalate, via the formation of 2-isopropylmaleate. The polypeptide is 3-isopropylmalate dehydratase small subunit (leuD) (Sulfurisphaera tokodaii (strain DSM 16993 / JCM 10545 / NBRC 100140 / 7) (Sulfolobus tokodaii)).